The chain runs to 135 residues: Insoluble matrix shell protein 5 (135 aa).

The N-terminal stretch at 1 to 16 (MILVVTLACLIAVVCC) is a signal peptide. 2 consecutive EF-hand domains span residues 21–56 (TDQGQISKVFKAYDIDGNNKISRVEGTMVFRDADLN) and 93–128 (IEFVEGNQGFDHFDKNRDNEISSWEFTQTWMETVRP). The Ca(2+) site is built by Asp34, Asp36, Asn38, Lys40, Glu45, Asp106, Asn108, Asp110, Glu112, and Glu117.

As to expression, component of the acid-insoluble organic matrix of the calcified shell.

Its subcellular location is the secreted. The polypeptide is Insoluble matrix shell protein 5 (Ruditapes philippinarum (Japanese carpet shell)).